A 197-amino-acid polypeptide reads, in one-letter code: 3-isopropylmalate dehydratase small subunit (197 aa).

Belongs to the LeuD family. LeuD type 1 subfamily. Heterodimer of LeuC and LeuD.

It catalyses the reaction (2R,3S)-3-isopropylmalate = (2S)-2-isopropylmalate. The protein operates within amino-acid biosynthesis; L-leucine biosynthesis; L-leucine from 3-methyl-2-oxobutanoate: step 2/4. Catalyzes the isomerization between 2-isopropylmalate and 3-isopropylmalate, via the formation of 2-isopropylmaleate. The polypeptide is 3-isopropylmalate dehydratase small subunit (Shouchella clausii (strain KSM-K16) (Alkalihalobacillus clausii)).